Reading from the N-terminus, the 595-residue chain is MNKNICLSASHKQNNRDDPIINELINYFGNETFTIQSTRIGVPVVWVTREQILDFLIFLKKKPNSYLMLYDLHGVDERLRNNREGLPAVDFTVFYHLLSIKSNSDIILKVPLLEGDISLPTATNIFSNANWYERETWDMFGIIFHGHPHLTRIIMPPSWVGHPLRKDYPARATEFNPFVLTKEKEELEMDSLTFKPEKWGIKHSNHKDDFMFLNFGPNHPSAHGAFRIVLQLDGEEIVDCIPDIGYHHRGVEKMSERQSWHSYIPYTDRVEYLGGCVNEMPYVLAVEKLAGIVVPDRVNVIRIMLSELFRINSHLLYISTYIQDVGGMTPIFLAFTDRQKIYNVVEAITGARMHPAWFRIGGVAHDLPHGWNMLLKELLDWLPNRLEHYVKVALENSILRSRSEGIASYSAKEALEWGVTGAALRATGINFDVRKWRPYSGYDNFEFEIPVGNGISDCYSRVMLKVEEIRQSIRILKQCLHNMPAGPFKADHPLTTPPPKERTLQHIETLISHFLQVSWGPIIPANESFQMIEATKGINSYYLTSDGNTMSYRTRIRTPSFPHLQQIPSVIRGSLISDLIVYLGSIDFVMSDVDR.

The tract at residues 1–185 (MNKNICLSAS…NPFVLTKEKE (185 aa)) is NADH dehydrogenase I subunit C. The segment at 209–595 (DFMFLNFGPN…IDFVMSDVDR (387 aa)) is NADH dehydrogenase I subunit D.

This sequence in the N-terminal section; belongs to the complex I 30 kDa subunit family. The protein in the C-terminal section; belongs to the complex I 49 kDa subunit family. As to quaternary structure, NDH-1 is composed of 13 different subunits. Subunits NuoB, CD, E, F, and G constitute the peripheral sector of the complex.

Its subcellular location is the cell inner membrane. The catalysed reaction is a quinone + NADH + 5 H(+)(in) = a quinol + NAD(+) + 4 H(+)(out). NDH-1 shuttles electrons from NADH, via FMN and iron-sulfur (Fe-S) centers, to quinones in the respiratory chain. The immediate electron acceptor for the enzyme in this species is believed to be ubiquinone. Couples the redox reaction to proton translocation (for every two electrons transferred, four hydrogen ions are translocated across the cytoplasmic membrane), and thus conserves the redox energy in a proton gradient. This chain is NADH-quinone oxidoreductase subunit C/D, found in Baumannia cicadellinicola subsp. Homalodisca coagulata.